Here is a 748-residue protein sequence, read N- to C-terminus: CCR4-NOT transcription complex subunit 10-A (748 aa).

The segment covering 1 to 17 (MAADKAGEQGAEKHEDS) has biased composition (basic and acidic residues). Disordered stretches follow at residues 1-25 (MAAD…GISD), 184-205 (SNNK…EPFA), 483-524 (KQEN…PPSS), and 605-635 (VSLG…QMPQ). The segment covering 185–200 (NNKNGKNNETNSNANN) has biased composition (low complexity). Composition is skewed to polar residues over residues 487–509 (GSKT…VCSN) and 605–615 (VSLGVSSNEQE).

It belongs to the CNOT10 family. Component of the CCR4-NOT complex. cnot10 and cnot11 form a subcomplex docked to the cnot1 scaffold.

The protein localises to the cytoplasm. It localises to the nucleus. Component of the CCR4-NOT complex which is one of the major cellular mRNA deadenylases and is linked to various cellular processes including bulk mRNA degradation, miRNA-mediated repression, translational repression during translational initiation and general transcription regulation. Additional complex functions may be a consequence of its influence on mRNA expression. Is not required for association of CNOT7 to the CCR4-NOT complex. This Xenopus laevis (African clawed frog) protein is CCR4-NOT transcription complex subunit 10-A (cnot10-a).